The following is a 359-amino-acid chain: Peroxisome assembly protein 12 (359 aa).

Residues 1–19 (MAEHGAHFTAASVADDQPS) lie on the Peroxisomal matrix side of the membrane. A helical membrane pass occupies residues 20–47 (IFEVVAQDSLMTAVRPALQHVVKVLAES). Residues 48–51 (NPTH) lie on the Cytoplasmic side of the membrane. Residues 52–76 (YGFLWRWFDEIFTLLDLLLQQHYLS) traverse the membrane as a helical segment. At 77–109 (RTSASFSENFYGLKRIVMGDTHKSQRLASAGLP) the chain is on the peroxisomal matrix side. A helical transmembrane segment spans residues 110 to 139 (KQQLWKSIMFLVLLPYLKVKLEKLVSSLRE). Residues 140-144 (EDEYS) are Cytoplasmic-facing. A helical transmembrane segment spans residues 145–183 (IHPPSSRWKRFYRAFLAAYPFVNMAWEGWFLVQQLRYIL). At 184–249 (GKAQHHSPLL…VGGVALSLST (66 aa)) the chain is on the peroxisomal matrix side. Residues 250-277 (GLSVGVFFLQFLDWWYSSENQETIKSLT) form a helical membrane-spanning segment. Over 278-359 (ALPTPPPPVH…HLIKLYSPEN (82 aa)) the chain is Cytoplasmic. Residues Cys-304, Cys-307, Cys-325, and Cys-328 each coordinate Zn(2+). The RING-type; degenerate zinc finger occupies 304–343 (CPLCRKTRVNDTVLATSGYVFCYRCVFHYVRSHQACPITG).

It belongs to the pex2/pex10/pex12 family. In terms of assembly, component of the PEX2-PEX10-PEX12 retrotranslocation channel, composed of PEX2, PEX10 and PEX12. Interacts with PEX19 via its cytoplasmic domain.

It is found in the peroxisome membrane. It functions in the pathway protein modification; protein ubiquitination. Component of a retrotranslocation channel required for peroxisome organization by mediating export of the PEX5 receptor from peroxisomes to the cytosol, thereby promoting PEX5 recycling. The retrotranslocation channel is composed of PEX2, PEX10 and PEX12; each subunit contributing transmembrane segments that coassemble into an open channel that specifically allows the passage of PEX5 through the peroxisomal membrane. PEX12 also regulates PEX5 recycling by activating the E3 ubiquitin-protein ligase activity of PEX10. When PEX5 recycling is compromised, PEX12 stimulates PEX10-mediated polyubiquitination of PEX5, leading to its subsequent degradation. This is Peroxisome assembly protein 12 from Homo sapiens (Human).